A 101-amino-acid chain; its full sequence is ATP-dependent Clp protease adapter protein ClpS 2 (101 aa).

It belongs to the ClpS family. As to quaternary structure, binds to the N-terminal domain of the chaperone ClpA.

In terms of biological role, involved in the modulation of the specificity of the ClpAP-mediated ATP-dependent protein degradation. The sequence is that of ATP-dependent Clp protease adapter protein ClpS 2 from Rhizobium meliloti (strain 1021) (Ensifer meliloti).